The sequence spans 169 residues: Peptide methionine sulfoxide reductase MsrA (169 aa).

Cys-10 is a catalytic residue.

It belongs to the MsrA Met sulfoxide reductase family.

The enzyme catalyses L-methionyl-[protein] + [thioredoxin]-disulfide + H2O = L-methionyl-(S)-S-oxide-[protein] + [thioredoxin]-dithiol. It carries out the reaction [thioredoxin]-disulfide + L-methionine + H2O = L-methionine (S)-S-oxide + [thioredoxin]-dithiol. In terms of biological role, has an important function as a repair enzyme for proteins that have been inactivated by oxidation. Catalyzes the reversible oxidation-reduction of methionine sulfoxide in proteins to methionine. This is Peptide methionine sulfoxide reductase MsrA from Streptococcus pyogenes serotype M3 (strain ATCC BAA-595 / MGAS315).